A 145-amino-acid polypeptide reads, in one-letter code: D-aminoacyl-tRNA deacylase (145 aa).

The Gly-cisPro motif, important for rejection of L-amino acids signature appears at 137–138; the sequence is GP.

This sequence belongs to the DTD family. As to quaternary structure, homodimer.

It is found in the cytoplasm. The enzyme catalyses glycyl-tRNA(Ala) + H2O = tRNA(Ala) + glycine + H(+). It catalyses the reaction a D-aminoacyl-tRNA + H2O = a tRNA + a D-alpha-amino acid + H(+). In terms of biological role, an aminoacyl-tRNA editing enzyme that deacylates mischarged D-aminoacyl-tRNAs. Also deacylates mischarged glycyl-tRNA(Ala), protecting cells against glycine mischarging by AlaRS. Acts via tRNA-based rather than protein-based catalysis; rejects L-amino acids rather than detecting D-amino acids in the active site. By recycling D-aminoacyl-tRNA to D-amino acids and free tRNA molecules, this enzyme counteracts the toxicity associated with the formation of D-aminoacyl-tRNA entities in vivo and helps enforce protein L-homochirality. The sequence is that of D-aminoacyl-tRNA deacylase from Salmonella typhi.